The following is a 381-amino-acid chain: NF-kappa-B inhibitor-like protein 1 (381 aa).

The tract at residues methionine 1–glutamate 34 is disordered. 2 ANK repeats span residues glycine 64–histidine 93 and histidine 97–lysine 133. Disordered stretches follow at residues lysine 131–glutamine 167, glycine 186–glutamate 242, and glutamate 256–leucine 294. Serine 150 is modified (phosphoserine). The span at serine 150–alanine 159 shows a compositional bias: acidic residues. Residues glutamate 256–arginine 287 show a composition bias toward basic and acidic residues.

In terms of assembly, interacts with CACTIN (via N-terminal domain); the interaction occurs in a pro-inflammatory-independent manner.

Its subcellular location is the nucleus. In terms of biological role, involved in the regulation of innate immune response. Acts as negative regulator of Toll-like receptor and interferon-regulatory factor (IRF) signaling pathways. Contributes to the negative regulation of transcriptional activation of NF-kappa-B target genes in response to endogenous pro-inflammatory stimuli. The chain is NF-kappa-B inhibitor-like protein 1 (NFKBIL1) from Macaca mulatta (Rhesus macaque).